Reading from the N-terminus, the 300-residue chain is ESX-5 secretion-associated protein EspG5 (300 aa).

It belongs to the EspG family. As to quaternary structure, interacts specifically with ESX-5-dependent PE/PPE proteins. Binds PPE33 and PPE18. Does not interact with EsxN. Monomer in solution.

The protein localises to the cytoplasm. Specific chaperone for cognate PE/PPE proteins. Plays an important role in preventing aggregation of PE/PPE dimers. Required for LipY and PE31/PPE18 secretion. This chain is ESX-5 secretion-associated protein EspG5, found in Mycobacterium marinum (strain ATCC BAA-535 / M).